Consider the following 185-residue polypeptide: Probable prefoldin subunit 3 (185 aa).

The protein belongs to the prefoldin subunit alpha family. As to quaternary structure, heterohexamer of two PFD-alpha type and four PFD-beta type subunits.

In terms of biological role, binds specifically to cytosolic chaperonin (c-CPN) and transfers target proteins to it. Binds to nascent polypeptide chain and promotes folding in an environment in which there are many competing pathways for nonnative proteins. This is Probable prefoldin subunit 3 (pfd-3) from Caenorhabditis elegans.